Here is a 738-residue protein sequence, read N- to C-terminus: Exocyst complex component 3 (738 aa).

Residues 28-91 (LEKVEQYRHR…DEVERLLRGV (64 aa)) are a coiled coil.

Belongs to the SEC6 family. The exocyst complex is composed of Sec3/Exoc1, Sec5/Exoc2, Sec6/Exoc3, Sec8/Exoc4, Sec10/Exoc5, Sec15/Exoc6, Exo70/Exoc7 and Exo84/Exoc8.

Functionally, component of the exocyst complex involved in the docking of exocytic vesicles with fusion sites on the plasma membrane. The chain is Exocyst complex component 3 from Drosophila melanogaster (Fruit fly).